Consider the following 406-residue polypeptide: Cysteine desulfurase (406 aa).

The residue at position 226 (K226) is an N6-(pyridoxal phosphate)lysine. C364 acts as the Cysteine persulfide intermediate in catalysis.

This sequence belongs to the class-V pyridoxal-phosphate-dependent aminotransferase family. Csd subfamily. In terms of assembly, homodimer. Interacts with SufE and the SufBCD complex composed of SufB, SufC and SufD. The interaction with SufE is required to mediate the direct transfer of the sulfur atom from the S-sulfanylcysteine. Pyridoxal 5'-phosphate is required as a cofactor.

It is found in the cytoplasm. The catalysed reaction is (sulfur carrier)-H + L-cysteine = (sulfur carrier)-SH + L-alanine. It catalyses the reaction L-selenocysteine + AH2 = hydrogenselenide + L-alanine + A + H(+). It functions in the pathway cofactor biosynthesis; iron-sulfur cluster biosynthesis. Functionally, cysteine desulfurases mobilize the sulfur from L-cysteine to yield L-alanine, an essential step in sulfur metabolism for biosynthesis of a variety of sulfur-containing biomolecules. Component of the suf operon, which is activated and required under specific conditions such as oxidative stress and iron limitation. Acts as a potent selenocysteine lyase in vitro, that mobilizes selenium from L-selenocysteine. Selenocysteine lyase activity is however unsure in vivo. This is Cysteine desulfurase from Shigella sonnei (strain Ss046).